The primary structure comprises 179 residues: MKQFLDFLPLVVFFAFYKLYDIYAATTALIVATAIVLIYTWIRYRKVEKMALITFVLVAVFGGLTVFFHNDEFIKWKVTVIYGLFAGALLFSQWVMNKPLIQRMLGKEITLPQEVWSRLNIAWAVFFILCGLANIYIAFWMPQNIWVNFKVFGLTALTLIFTLLSGVYIYKHMPQDDKH.

The next 5 membrane-spanning stretches (helical) occupy residues 22 to 42 (IYAATTALIVATAIVLIYTWI), 50 to 70 (MALITFVLVAVFGGLTVFFHN), 76 to 96 (WKVTVIYGLFAGALLFSQWVM), 121 to 141 (IAWAVFFILCGLANIYIAFWM), and 149 to 169 (FKVFGLTALTLIFTLLSGVYI).

The protein belongs to the YciB family.

It is found in the cell inner membrane. Functionally, plays a role in cell envelope biogenesis, maintenance of cell envelope integrity and membrane homeostasis. This is Inner membrane-spanning protein YciB from Enterobacter sp. (strain 638).